A 153-amino-acid chain; its full sequence is Ribosomal RNA large subunit methyltransferase H (153 aa).

2 residues coordinate S-adenosyl-L-methionine: Leu-71 and Gly-102.

The protein belongs to the RNA methyltransferase RlmH family. In terms of assembly, homodimer.

It is found in the cytoplasm. The catalysed reaction is pseudouridine(1915) in 23S rRNA + S-adenosyl-L-methionine = N(3)-methylpseudouridine(1915) in 23S rRNA + S-adenosyl-L-homocysteine + H(+). Functionally, specifically methylates the pseudouridine at position 1915 (m3Psi1915) in 23S rRNA. The chain is Ribosomal RNA large subunit methyltransferase H from Anaeromyxobacter dehalogenans (strain 2CP-C).